A 319-amino-acid polypeptide reads, in one-letter code: Pectinesterase (319 aa).

Gln-1 carries the pyrrolidone carboxylic acid modification. Residues Thr-83 and Gln-113 each coordinate substrate. The active-site Proton donor is Asp-136. A disulfide bridge connects residues Cys-150 and Cys-170. Asp-157 functions as the Nucleophile in the catalytic mechanism. Arg-225 and Trp-227 together coordinate substrate.

This sequence belongs to the pectinesterase family.

The protein resides in the secreted. It is found in the cell wall. The catalysed reaction is [(1-&gt;4)-alpha-D-galacturonosyl methyl ester](n) + n H2O = [(1-&gt;4)-alpha-D-galacturonosyl](n) + n methanol + n H(+). The protein operates within glycan metabolism; pectin degradation; 2-dehydro-3-deoxy-D-gluconate from pectin: step 1/5. Functionally, catalyzes the deesterification of methyl-esterified D-galactosiduronic acid units in pectic compounds. It participates in modulating cell wall during fruit ripening, cell wall extension during pollen germination, and in defense mechanisms against pathogens. The polypeptide is Pectinesterase (Daucus carota (Wild carrot)).